The following is a 487-amino-acid chain: 3-octaprenyl-4-hydroxybenzoate carboxy-lyase (487 aa).

Asn-172 provides a ligand contact to Mn(2+). Residues 175–177 (IYR), 189–191 (RWL), and 194–195 (RG) contribute to the prenylated FMN site. Glu-238 provides a ligand contact to Mn(2+). The Proton donor role is filled by Asp-287.

The protein belongs to the UbiD family. Homohexamer. Prenylated FMN is required as a cofactor. The cofactor is Mn(2+).

Its subcellular location is the cell membrane. The catalysed reaction is a 4-hydroxy-3-(all-trans-polyprenyl)benzoate + H(+) = a 2-(all-trans-polyprenyl)phenol + CO2. The protein operates within cofactor biosynthesis; ubiquinone biosynthesis. Catalyzes the decarboxylation of 3-octaprenyl-4-hydroxy benzoate to 2-octaprenylphenol, an intermediate step in ubiquinone biosynthesis. In Actinobacillus pleuropneumoniae serotype 7 (strain AP76), this protein is 3-octaprenyl-4-hydroxybenzoate carboxy-lyase.